The chain runs to 302 residues: UPF0761 membrane protein Tola_0461 (302 aa).

A run of 6 helical transmembrane segments spans residues 51-71 (YVSL…LSWL), 111-131 (TTSI…AAID), 150-170 (ITMY…SLLL), 188-208 (LGGG…ILLL), 222-242 (ALLG…GFGY), and 256-276 (ALAG…VVLL).

The protein belongs to the UPF0761 family.

The protein resides in the cell inner membrane. This Tolumonas auensis (strain DSM 9187 / NBRC 110442 / TA 4) protein is UPF0761 membrane protein Tola_0461.